The chain runs to 207 residues: Small ribosomal subunit protein uS4 (207 aa).

The segment at 20–45 is disordered; the sequence is TPKAARYMEKRPYAPGEHGRTKRKAD. Residues 93–158 form the S4 RNA-binding domain; that stretch reads MRLDALVLRA…TEPFQVAAAG (66 aa).

It belongs to the universal ribosomal protein uS4 family. Part of the 30S ribosomal subunit. Contacts protein S5. The interaction surface between S4 and S5 is involved in control of translational fidelity.

In terms of biological role, one of the primary rRNA binding proteins, it binds directly to 16S rRNA where it nucleates assembly of the body of the 30S subunit. With S5 and S12 plays an important role in translational accuracy. This Leifsonia xyli subsp. xyli (strain CTCB07) protein is Small ribosomal subunit protein uS4.